Here is a 754-residue protein sequence, read N- to C-terminus: MQLINVIKSSGVSQSFDPQKIIKVLSWAAEGTSVDPYELYENIKSYLRDGMTTDDIQTIVIKAAANSISVEEPDYQYVAARCLMFALRKHVYGQYEPRSFIDHISYCVNAGKYDPELLSKYSAEEITFLESKIKHERDMEFTYSGAMQLKEKYLVKDKTTGQIYETPQFAFMTIGMALHQDEPVDRLKHVIRFYEAVSTRQISLPTPIMAGCRTPTRQFSSCVVIEAGDSLKSINKASASIVEYISKRAGIGINVGMIRAEGSKIGMGEVRHTGVIPFWKHFQTAVKSCSQGGIRGGAATAYYPIWHLEVENLLVLKNNKGVEENRIRHMDYGVQLNDLMMERFGKNDYITLFSPHEMGGELYYSYFKDQDRFRELYEAAEKDPNIRKKRIKARELFELLMTERSGTARIYVQFIDNTNNYTPFIREKAPIRQSNLCCEIAIPTNDVNSPDAEIGLCTLSAFVLDNFDWQDQDKINELAEVQVRALDNLLDYQGYPVPEAEKAKKRRNLGVGVTNYAAWLASNFASYEDANDLTHELFERLQYGLIKASIKLAKEKGPSEYYSDTRWSRGELPIDWYNKKIDQIAAPKYVCDWSALREDLKLFGIRNSTLSALMPCESSSQVSNSTNGYEPPRGPVSVKESKEGSFNQVVPNIEHNIDLYDYTWKLAKKGNKPYLTQVAIMLKWVCQSASANTYYDPQIFPKGKVPMSIMIDDMLYGWYYGIKNFYYHNTRDGSGTDDYEIETPKADDCAACKL.

The ATP-cone domain occupies 4 to 93 (INVIKSSGVS…MFALRKHVYG (90 aa)). Residues Thr-206, 221-222 (SC), Gly-250, 435-439 (NLCCE), and 615-619 (PCESS) each bind substrate. Cys-222 and Cys-457 form a disulfide bridge. The active-site Proton acceptor is Asn-435. The active-site Cysteine radical intermediate is Cys-437. Glu-439 (proton acceptor) is an active-site residue. The disordered stretch occupies residues 621–641 (QVSNSTNGYEPPRGPVSVKES).

This sequence belongs to the ribonucleoside diphosphate reductase large chain family. Heterodimer of a large and a small subunit.

The enzyme catalyses a 2'-deoxyribonucleoside 5'-diphosphate + [thioredoxin]-disulfide + H2O = a ribonucleoside 5'-diphosphate + [thioredoxin]-dithiol. Its activity is regulated as follows. Under complex allosteric control mediated by deoxynucleoside triphosphates and ATP binding. The type of nucleotide bound at the specificity site determines substrate preference. It seems probable that ATP makes the enzyme reduce CDP and UDP, dGTP favors ADP reduction and dTTP favors GDP reduction. In terms of biological role, provides the precursors necessary for DNA synthesis. Catalyzes the biosynthesis of deoxyribonucleotides from the corresponding ribonucleotides. The chain is Ribonucleoside-diphosphate reductase subunit alpha (NRDA) from Escherichia coli (Bacteriophage T4).